The chain runs to 254 residues: D-aminoacyl-tRNA deacylase (254 aa).

Residues lysine 61–glutamate 83 form a disordered region. Residues threonine 65–glutamate 74 show a composition bias toward polar residues.

This sequence belongs to the DtdA deacylase family. In terms of assembly, monomer. The cofactor is Zn(2+).

The enzyme catalyses a D-aminoacyl-tRNA + H2O = a tRNA + a D-alpha-amino acid + H(+). It carries out the reaction glycyl-tRNA(Ala) + H2O = tRNA(Ala) + glycine + H(+). Its function is as follows. D-aminoacyl-tRNA deacylase with broad substrate specificity. By recycling D-aminoacyl-tRNA to D-amino acids and free tRNA molecules, this enzyme counteracts the toxicity associated with the formation of D-aminoacyl-tRNA entities in vivo. The protein is D-aminoacyl-tRNA deacylase of Methanococcus maripaludis (strain C7 / ATCC BAA-1331).